The chain runs to 108 residues: Hydrogenase expression/formation protein HupN (108 aa).

Residues R88–P108 are disordered.

The protein belongs to the HupF/HypC family.

The chain is Hydrogenase expression/formation protein HupN (hupN) from Azotobacter chroococcum mcd 1.